Reading from the N-terminus, the 393-residue chain is MQDIVQDALDNAEAEQREMDGDGDGDEFGDPRIVIVGCGGAGNNTVNRLYNIGVEGADTVAINTDKQHLKMIKADTKILVGKSLTNGLGAGGDPSMGERATEMAQGTIKEVLGDADLVFVTAGMGGGTGTGAAPVVSKIAKEQGAIVVGMVSTPFNVERARTVKAEEGLEKLREKADSIIVLDNNRLLDYVPNLPIGKAFSVMDQIIAETVKGISETITQPSLINLDYADMTAIMNQGGVAVMLVGETQDKNKTNEVVKDAMNHPLLDVDYRGASGGLVHITGGPDLTLKEAEGIADNITERLDASANVIWGARIQESYKGKVRVMAIMTGVQSAQVLGPSTQKQADKSRRELQDVDSKQRAADDAGAGGFGGAHSDGGQDEVEQENGLDVIR.

The tract at residues 1–28 is disordered; that stretch reads MQDIVQDALDNAEAEQREMDGDGDGDEF. GTP contacts are provided by residues 40–44, 127–129, glutamate 158, arginine 161, and aspartate 204; these read GAGNN and GTG. Positions 339 to 393 are disordered; sequence GPSTQKQADKSRRELQDVDSKQRAADDAGAGGFGGAHSDGGQDEVEQENGLDVIR. Residues 345–364 are compositionally biased toward basic and acidic residues; the sequence is QADKSRRELQDVDSKQRAAD. The span at 367–376 shows a compositional bias: gly residues; it reads GAGGFGGAHS.

It belongs to the FtsZ family. Homodimer. Polymerizes to form a dynamic ring structure in a strictly GTP-dependent manner. Interacts directly with several other division proteins.

Its subcellular location is the cytoplasm. Functionally, essential cell division protein that forms a contractile ring structure (Z ring) at the future cell division site. The regulation of the ring assembly controls the timing and the location of cell division. One of the functions of the FtsZ ring is to recruit other cell division proteins to the septum to produce a new cell wall between the dividing cells. Binds GTP and shows GTPase activity. Overexpression causes significant changes in cell morphology. This chain is Cell division protein FtsZ 2, found in Halobacterium salinarum (strain ATCC 29341 / DSM 671 / R1).